A 439-amino-acid polypeptide reads, in one-letter code: Dihydroorotase (439 aa).

Residues His-73 and His-75 each contribute to the Zn(2+) site. Substrate is bound by residues 75-77 (HLR) and Asn-107. Asp-165, His-192, and His-245 together coordinate Zn(2+). A substrate-binding site is contributed by Asn-291. Asp-318 contributes to the Zn(2+) binding site. Asp-318 is an active-site residue. His-322 contacts substrate.

This sequence belongs to the metallo-dependent hydrolases superfamily. DHOase family. Class I DHOase subfamily. The cofactor is Zn(2+).

The catalysed reaction is (S)-dihydroorotate + H2O = N-carbamoyl-L-aspartate + H(+). It participates in pyrimidine metabolism; UMP biosynthesis via de novo pathway; (S)-dihydroorotate from bicarbonate: step 3/3. Its function is as follows. Catalyzes the reversible cyclization of carbamoyl aspartate to dihydroorotate. In Syntrophobacter fumaroxidans (strain DSM 10017 / MPOB), this protein is Dihydroorotase.